Reading from the N-terminus, the 171-residue chain is MQDTITNILNKYDLTGKYLDNNALTQITTYLNTALQRLEVVEIIQSQSSKIIKEAAARMYSEQPELLRPGGNSYTTRKYAMCLRDIEYYLRYATYAIIAGNNDILNERVLDGLKDTYNSLNVPIAPTVRSIQIMEEIIHNEISKQDLKIIKKSIISEPFDHMIQNLSEQDI.

Asn72 carries the N4-methylasparagine modification. Cys82 provides a ligand contact to (2R,3E)-phycocyanobilin.

It belongs to the phycobiliprotein family. Heterodimer of an alpha and a beta chain. Post-translationally, contains one covalently linked bilin chromophore.

Its subcellular location is the plastid. The protein resides in the chloroplast thylakoid membrane. In terms of biological role, light-harvesting photosynthetic bile pigment-protein from the phycobiliprotein complex. Allophycocyanin has a maximum absorption at approximately 650 nanometers. This chain is Allophycocyanin subunit beta-18 (apcF), found in Aglaothamnion neglectum (Red alga).